A 149-amino-acid chain; its full sequence is Putative pre-16S rRNA nuclease (149 aa).

The protein belongs to the YqgF nuclease family.

Its subcellular location is the cytoplasm. Its function is as follows. Could be a nuclease involved in processing of the 5'-end of pre-16S rRNA. In Burkholderia vietnamiensis (strain G4 / LMG 22486) (Burkholderia cepacia (strain R1808)), this protein is Putative pre-16S rRNA nuclease.